The following is a 33-amino-acid chain: Cyanophlyctin-beta (33 aa).

Cysteines 27 and 33 form a disulfide.

In terms of tissue distribution, expressed by the skin glands.

It is found in the secreted. Antimicrobial peptide active against E.coli (MIC=5 uM), K.pneumoniae (MIC=10 uM), B.cereus (MIC=7 uM) and S.aureus (MIC=12 uM). Has very little hemolytic activity. The protein is Cyanophlyctin-beta of Euphlyctis cyanophlyctis (Skittering frog).